The primary structure comprises 339 residues: Protein FAM50A (339 aa).

The tract at residues 1–31 is disordered; the sequence is MAQYKGAASEAGRAMHLMKKREKQREQMEQM. Position 2 is an N-acetylalanine (A2). A Glycyl lysine isopeptide (Lys-Gly) (interchain with G-Cter in SUMO2) cross-link involves residue K100. The segment at 150–177 is disordered; sequence TTKKKKLGKNPDVDTSFLPDRDREEEEN. The Nuclear localization signal signature appears at 152 to 155; the sequence is KKKK. Basic and acidic residues predominate over residues 168 to 177; it reads PDRDREEEEN.

The protein belongs to the FAM50 family. Interacts with EFTUD2, a component of the spliceosome U5 complex. Interacts with DDX41, a component of the spliceosome C complex. As to expression, widely expressed in embryonic and adult tissues.

The protein resides in the nucleus. In terms of biological role, probably involved in the regulation of pre-mRNA splicing. The protein is Protein FAM50A (Fam50a) of Mus musculus (Mouse).